The following is a 345-amino-acid chain: ATP-dependent (S)-NAD(P)H-hydrate dehydratase (345 aa).

The 324-residue stretch at 9–332 (ILSLARSMIP…DMVGEVYEEV (324 aa)) folds into the YjeF C-terminal domain. Residues Gly113 and 170–176 (NVMEFKR) contribute to the (6S)-NADPHX site. ATP contacts are provided by residues 208 to 212 (KGPSD) and 241 to 250 (GGLKRVGGQG). Asp251 contributes to the (6S)-NADPHX binding site.

It belongs to the NnrD/CARKD family. Mg(2+) serves as cofactor.

Its subcellular location is the cytoplasm. It catalyses the reaction (6S)-NADHX + ATP = ADP + phosphate + NADH + H(+). The catalysed reaction is (6S)-NADPHX + ATP = ADP + phosphate + NADPH + H(+). Catalyzes the dehydration of the S-form of NAD(P)HX at the expense of ATP, which is converted to ADP. Together with NAD(P)HX epimerase, which catalyzes the epimerization of the S- and R-forms, the enzyme allows the repair of both epimers of NAD(P)HX, a damaged form of NAD(P)H that is a result of enzymatic or heat-dependent hydration. The polypeptide is ATP-dependent (S)-NAD(P)H-hydrate dehydratase (Cryptococcus neoformans var. neoformans serotype D (strain JEC21 / ATCC MYA-565) (Filobasidiella neoformans)).